Consider the following 211-residue polypeptide: Holliday junction branch migration complex subunit RuvA (211 aa).

The interval 1–70 (MIQFLQGQVV…QDQIALFGFG (70 aa)) is domain I. Residues 71–149 (RLAERDLFGQ…QWHKLQMGTG (79 aa)) form a domain II region. The tract at residues 150–158 (ETDSTLPTT) is flexible linker. Residues 158 to 211 (TALLEDLEMTLLALGYTQTEIQQAIAMVSQVPDVAQSEDPEVWIRQAIGWLSDH) are domain III.

Belongs to the RuvA family. Homotetramer. Forms an RuvA(8)-RuvB(12)-Holliday junction (HJ) complex. HJ DNA is sandwiched between 2 RuvA tetramers; dsDNA enters through RuvA and exits via RuvB. An RuvB hexamer assembles on each DNA strand where it exits the tetramer. Each RuvB hexamer is contacted by two RuvA subunits (via domain III) on 2 adjacent RuvB subunits; this complex drives branch migration. In the full resolvosome a probable DNA-RuvA(4)-RuvB(12)-RuvC(2) complex forms which resolves the HJ.

It localises to the cytoplasm. In terms of biological role, the RuvA-RuvB-RuvC complex processes Holliday junction (HJ) DNA during genetic recombination and DNA repair, while the RuvA-RuvB complex plays an important role in the rescue of blocked DNA replication forks via replication fork reversal (RFR). RuvA specifically binds to HJ cruciform DNA, conferring on it an open structure. The RuvB hexamer acts as an ATP-dependent pump, pulling dsDNA into and through the RuvAB complex. HJ branch migration allows RuvC to scan DNA until it finds its consensus sequence, where it cleaves and resolves the cruciform DNA. This Synechocystis sp. (strain ATCC 27184 / PCC 6803 / Kazusa) protein is Holliday junction branch migration complex subunit RuvA.